We begin with the raw amino-acid sequence, 721 residues long: Ribonucleoside-diphosphate reductase subunit alpha (721 aa).

Residues Thr159, Ser175–Cys176, Gly204, Asn384–Glu388, and Pro589–Ile593 contribute to the substrate site. Cys176 and Cys413 are joined by a disulfide. Asn384 serves as the catalytic Proton acceptor. The Cysteine radical intermediate role is filled by Cys386. Glu388 serves as the catalytic Proton acceptor.

This sequence belongs to the ribonucleoside diphosphate reductase large chain family. Tetramer of two alpha and two beta subunits.

It carries out the reaction a 2'-deoxyribonucleoside 5'-diphosphate + [thioredoxin]-disulfide + H2O = a ribonucleoside 5'-diphosphate + [thioredoxin]-dithiol. Its activity is regulated as follows. Under complex allosteric control mediated by deoxynucleoside triphosphates and ATP binding. The type of nucleotide bound at the specificity site determines substrate preference. It seems probable that ATP makes the enzyme reduce CDP and UDP, dGTP favors ADP reduction and dTTP favors GDP reduction. Functionally, provides the precursors necessary for DNA synthesis. Catalyzes the biosynthesis of deoxyribonucleotides from the corresponding ribonucleotides. The polypeptide is Ribonucleoside-diphosphate reductase subunit alpha (nrdE) (Mycoplasma genitalium (strain ATCC 33530 / DSM 19775 / NCTC 10195 / G37) (Mycoplasmoides genitalium)).